The chain runs to 647 residues: 1-deoxy-D-xylulose-5-phosphate synthase (647 aa).

Residues histidine 79 and 120–122 contribute to the thiamine diphosphate site; that span reads GHA. Aspartate 152 provides a ligand contact to Mg(2+). Thiamine diphosphate contacts are provided by residues 153–154, asparagine 181, phenylalanine 293, and glutamate 377; that span reads GS. Asparagine 181 contacts Mg(2+).

The protein belongs to the transketolase family. DXPS subfamily. Homodimer. It depends on Mg(2+) as a cofactor. Requires thiamine diphosphate as cofactor.

It catalyses the reaction D-glyceraldehyde 3-phosphate + pyruvate + H(+) = 1-deoxy-D-xylulose 5-phosphate + CO2. The protein operates within metabolic intermediate biosynthesis; 1-deoxy-D-xylulose 5-phosphate biosynthesis; 1-deoxy-D-xylulose 5-phosphate from D-glyceraldehyde 3-phosphate and pyruvate: step 1/1. In terms of biological role, catalyzes the acyloin condensation reaction between C atoms 2 and 3 of pyruvate and glyceraldehyde 3-phosphate to yield 1-deoxy-D-xylulose-5-phosphate (DXP). This chain is 1-deoxy-D-xylulose-5-phosphate synthase, found in Bacteroides thetaiotaomicron (strain ATCC 29148 / DSM 2079 / JCM 5827 / CCUG 10774 / NCTC 10582 / VPI-5482 / E50).